We begin with the raw amino-acid sequence, 231 residues long: MLHASTIWHLRSTPPRRKQWGHCDPHRILVASEVTTEITSPTPAPRAQVCGGQPWVTVLDPLSGHTGREAERHFATVSISAVELKYCHGWRPAGQRVPSKTATGQRTCAKPCQKPSTSKVILRAVADKGTCKYVSLATLKKAVSTTGYDMARNAYHFKRVLKGLVDKGSAGSFTLGKKQASKSKLKVKRQRQQRWRSGQRPFGQHRSLLGSKQGHKRLIKGVRRVAKCHCN.

In terms of domain architecture, H15 spans 113-177; sequence QKPSTSKVIL…GSAGSFTLGK (65 aa). A Phosphoserine modification is found at S135. A disordered region spans residues 177-214; the sequence is KKQASKSKLKVKRQRQQRWRSGQRPFGQHRSLLGSKQG. Basic residues predominate over residues 179–194; sequence QASKSKLKVKRQRQQR.

It belongs to the histone H1/H5 family. As to expression, expressed exclusively in the testis.

Its subcellular location is the nucleus. It is found in the chromosome. DNA-binding protein that may be implicated in chromatin remodeling and/or transcriptional regulation during spermiogenesis, the process of spermatid maturation into spermatozoa. This chain is Putative histone H1.9, found in Homo sapiens (Human).